We begin with the raw amino-acid sequence, 743 residues long: 1,4-alpha-glucan branching enzyme GlgB (743 aa).

Asp416 functions as the Nucleophile in the catalytic mechanism. Residue Glu469 is the Proton donor of the active site.

The protein belongs to the glycosyl hydrolase 13 family. GlgB subfamily. In terms of assembly, monomer.

The catalysed reaction is Transfers a segment of a (1-&gt;4)-alpha-D-glucan chain to a primary hydroxy group in a similar glucan chain.. It functions in the pathway glycan biosynthesis; glycogen biosynthesis. Its function is as follows. Catalyzes the formation of the alpha-1,6-glucosidic linkages in glycogen by scission of a 1,4-alpha-linked oligosaccharide from growing alpha-1,4-glucan chains and the subsequent attachment of the oligosaccharide to the alpha-1,6 position. This chain is 1,4-alpha-glucan branching enzyme GlgB, found in Shewanella baltica (strain OS155 / ATCC BAA-1091).